A 748-amino-acid chain; its full sequence is Subtilisin-like protease (748 aa).

A signal peptide spans 1–24 (MMKMELRLLVSLIFILCSISMLAA). An Inhibitor I9 domain is found at 37–115 (TYIVHVKKSE…ARPERTLELH (79 aa)). In terms of domain architecture, Peptidase S8 spans 122–600 (FLGLKQGQGL…AGHVNPVKAN (479 aa)). Active-site charge relay system residues include Asp147 and His206. One can recognise a PA domain in the interval 365-454 (PLVYPGSFGY…VEVSYAAGLT (90 aa)). N-linked (GlcNAc...) asparagine glycosylation is found at Asn376, Asn380, and Asn405. Ser533 functions as the Charge relay system in the catalytic mechanism. 2 N-linked (GlcNAc...) asparagine glycosylation sites follow: Asn675 and Asn722.

This sequence belongs to the peptidase S8 family.

It localises to the secreted. The protein resides in the extracellular space. The protein localises to the apoplast. Its function is as follows. Required for arbuscular mycorrhiza (AM) development during AM symbiosis with AM fungi (e.g. Glomeromycota intraradices). The chain is Subtilisin-like protease from Medicago truncatula (Barrel medic).